The following is a 208-amino-acid chain: Flavin-dependent thymidylate synthase (208 aa).

The ThyX domain maps to 1–208 (MEVICKHYTP…QYLFEDCLKH (208 aa)). FAD-binding positions include Ser-50 and 74 to 76 (RHR). DUMP contacts are provided by residues 71 to 74 (ELSR), 84 to 86 (SSR), and Lys-147. Positions 74–84 (RHRIASLSVKS) match the ThyX motif motif. Residues 163–165 (NAR) and Asn-169 contribute to the FAD site. DUMP is bound at residue Arg-174. Catalysis depends on Arg-174, which acts as the Involved in ionization of N3 of dUMP, leading to its activation.

This sequence belongs to the thymidylate synthase ThyX family. In terms of assembly, homotetramer. Requires FAD as cofactor.

It carries out the reaction dUMP + (6R)-5,10-methylene-5,6,7,8-tetrahydrofolate + NADPH + H(+) = dTMP + (6S)-5,6,7,8-tetrahydrofolate + NADP(+). It participates in pyrimidine metabolism; dTTP biosynthesis. Catalyzes the reductive methylation of 2'-deoxyuridine-5'-monophosphate (dUMP) to 2'-deoxythymidine-5'-monophosphate (dTMP) while utilizing 5,10-methylenetetrahydrofolate (mTHF) as the methyl donor, and NAD(P)H and FADH(2) as the reductant. This is Flavin-dependent thymidylate synthase from Helicobacter pylori (strain ATCC 700392 / 26695) (Campylobacter pylori).